Reading from the N-terminus, the 1251-residue chain is MASPPESDGFSDVRKVGYLRKPKSMHKRFFVLRAASETGDPARLEYYENEKKWRHKSSAPKRSIPLESCFNINKRADSKNKHLVALYTRDEHFAIAADSEAEQDSWYQALLQLHNRAKGHHDGAAALGAGGGGGSCSGSSGLGEAGEDLSYGDVPPGPAFKEVWQVILKPKGLGQTKNLIGIYRLCLTSKTISFVKLNSEAAAVVLQLMNIRRCGHSENFFFIEVGRSAVTGPGEFWMQVDDSVVAQNMHETILEAMRAMSDEFRPRSKSQSSSNCSNPISVPLRRHHLNNPPPSQVGLTRRSRTESITATSPASMVGGKPGSFRVRASSDGEGTMSRPASVDGSPVSPSTNRTHAHRHRGSARLHPPLNHSRSIPMPASRCSPSATSPVSLSSSSTSGHGSTSDCLFPRRSSASVSGSPSDGGFISSDEYGSSPCDFRSSFRSVTPDSLGHTPPARGEEELSNYICMGGKGPSTLTAPNGHYILSRGGNGHRYTPGTGLGTSPALAGDEASSAADLDNRFRKRTHSAGTSPTITHQKTPSQSSVASIEEYTEMMPAYPPGGGSGGRLPGHRHSAFVPTHSYPEEGLEMHPLERRGGHHRPDSSTLHTDDGYMPMSPGVAPVPSSRKGSGDYMPMSPKSVSAPQQIINPIRRHPQRVDPNGYMMMSPSGGCSPDIGGGPSSSSSSTVPSGSSYGKLWTKGVGAHNSQVLLHPKPPVESSGGKLLPCTGDYMNMSPVGDSNTSSPSDCYYGPEDPQHKPVLSYYSLPRSFKHTQRPGEPEEGARHQHLRLSTSSGRLLYAATADDSSSSTSSDSLGGGYCGARLEPSLPHPHHQVLQPHLPRKVDTAAQTNSRLARPTRLSLGDPKASTLPRAREQQQQQQQQQQQQQQQQQPLLHPPEPKSPGEYVNIEFGSDQPGYLSGPVASRSSPSVRCPSQLQPAPREEETGTEEYMKMDLGPGRRAAWQESTGVEMGRLGPAPPGAASICRPTRAVPSSRGDYMTMQMSCPRQSYVDTSPIAPVSYADMRTGIAAEEVSLPRATMAAAASSSAASASPTGPQGAAELAAHSSLLGGAQGPGGMSAFTRVNLSPNRNQSAKVIRADPQGCRRRHSSETFSSTPSATRVGNTVPFGAGAAIGGSGGSSSSSEDVKRHSSASFENVWLRPGELGGAPKEPAQLCGAAGGLENGLNYIDLDLVKDFKQRPQECTPQPQPPPPPPPHQPLGSSESSSTRRSSEDLSAYASISFQKQPEDLQ.

S3 is subject to Phosphoserine. Residues 3–137 are mediates interaction with PHIP; sequence SPPESDGFSD…GAGGGGGSCS (135 aa). In terms of domain architecture, PH spans 12 to 115; the sequence is DVRKVGYLRK…WYQALLQLHN (104 aa). S99 is subject to Phosphoserine; by CK2. In terms of domain architecture, IRS-type PTB spans 160 to 264; that stretch reads FKEVWQVILK…EAMRAMSDEF (105 aa). Positions 262-430 are disordered; it reads DEFRPRSKSQ…SDGGFISSDE (169 aa). Over residues 269–281 the composition is skewed to low complexity; sequence KSQSSSNCSNPIS. Phosphoserine is present on S270. S307 bears the Phosphoserine; by RPS6KB1 mark. At S312 the chain carries Phosphoserine; by IKKB, MAPK8 and RPS6KB1. 4 positions are modified to phosphoserine: S323, S330, S345, and S348. The span at 354 to 363 shows a compositional bias: basic residues; the sequence is THAHRHRGSA. Composition is skewed to low complexity over residues 383–404 and 412–424; these read SPSATSPVSLSSSSTSGHGSTS and SSASVSGSPSDGG. A Phosphoserine modification is found at S419. Residues T446 and T453 each carry the phosphothreonine modification. Position 465 is a phosphotyrosine; by INSR (Y465). The short motif at 465–468 is the YXXM motif 1 element; the sequence is YICM. Residues 494–513 form a disordered region; that stretch reads YTPGTGLGTSPALAGDEASS. At S527 the chain carries Phosphoserine; by RPS6KB1. Residues 551–554 carry the YXXM motif 2 motif; the sequence is YTEM. Positions 594–610 are enriched in basic and acidic residues; the sequence is RRGGHHRPDSSTLHTDD. The segment at 594–616 is disordered; it reads RRGGHHRPDSSTLHTDDGYMPMS. Position 612 is a phosphotyrosine; by INSR (Y612). The YXXM motif 3 signature appears at 612–615; that stretch reads YMPM. S629 is subject to Phosphoserine. The residue at position 632 (Y632) is a Phosphotyrosine; by INSR. The YXXM motif 4 signature appears at 632-635; it reads YMPM. S636 is subject to Phosphoserine; by RPS6KB1. Y662 bears the Phosphotyrosine mark. The YXXM motif 5 motif lies at 662–665; sequence YMMM. Residues 668 to 692 are disordered; sequence SGGCSPDIGGGPSSSSSSTVPSGSS. A YXXM motif 6 motif is present at residues 730–733; the sequence is YMNM. 2 disordered regions span residues 734 to 753 and 769 to 946; these read SPVGDSNTSSPSDCYYGPED and FKHT…EETG. The span at 774–783 shows a compositional bias: basic and acidic residues; sequence RPGEPEEGAR. A Phosphoserine; by AMPK and SIK2 modification is found at S792. Low complexity-rich tracts occupy residues 799-813 and 875-891; these read AATADDSSSSTSSDS and QQQQQQQQQQQQQQQQQ. S901 bears the Phosphoserine mark. A Phosphotyrosine; by INSR modification is found at Y905. The tract at residues 905–907 is GRB2-binding; the sequence is YVN. The span at 924-937 shows a compositional bias: polar residues; it reads SRSSPSVRCPSQLQ. A phosphotyrosine; by INSR mark is found at Y950 and Y998. 3 short sequence motifs (YXXM motif) span residues 950–953, 998–1001, and 1021–1024; these read YMKM, YMTM, and YADM. Disordered regions lie at residues 1091-1124 and 1130-1149; these read NQSAKVIRADPQGCRRRHSSETFSSTPSATRVGN and AGAAIGGSGGSSSSSEDVKR. A phosphoserine mark is found at S1109 and S1110. Positions 1111–1123 are enriched in polar residues; that stretch reads ETFSSTPSATRVG. Phosphotyrosine; by INSR is present on Y1188. A Glycyl lysine isopeptide (Lys-Gly) (interchain with G-Cter in ubiquitin) cross-link involves residue K1195. The tract at residues 1195-1251 is disordered; that stretch reads KDFKQRPQECTPQPQPPPPPPPHQPLGSSESSSTRRSSEDLSAYASISFQKQPEDLQ. The segment covering 1207–1218 has biased composition (pro residues); sequence QPQPPPPPPPHQ. A Phosphotyrosine; by INSR modification is found at Y1238.

As to quaternary structure, interacts with UBTF and PIK3CA. Interacts (via phosphorylated YXXM motifs) with PIK3R1. Interacts with ROCK1 and FER. Interacts (via PH domain) with PHIP. Interacts with GRB2. Interacts with SOCS7. Interacts (via IRS-type PTB domain) with IGF1R and INSR (via the tyrosine-phosphorylated NPXY motif). Interacts with ALK. Interacts with EIF2AK2/PKR. Interacts with GKAP1. Interacts with DGKZ in the absence of insulin; insulin stimulation decreases this interaction. Found in a ternary complex with DGKZ and PIP5K1A in the absence of insulin stimulation. Interacts with SQSTM1; the interaction is disrupted by the presence of tensin TNS2. Interacts with NCK1 (via SH2 domain). Interacts with NCK2 (via SH3 domain). Interacts with SH2B1; this interaction enhances leptin-induced activation of the PI3-kinase pathway. Interacts with DVL2; this interaction promotes the Wnt/beta-catenin signaling pathway. Interacts with JAK1. Post-translationally, serine phosphorylation of IRS1 is a mechanism for insulin resistance. Ser-312 phosphorylation inhibits insulin action through disruption of IRS1 interaction with the insulin receptor. Phosphorylation of Tyr-905 is required for GRB2-binding. Phosphorylated by ALK. Phosphorylated at Ser-270, Ser-307, Ser-636 and Ser-1109 by RPS6KB1; phosphorylation induces accelerated degradation of IRS1. Phosphorylated on tyrosine residues in response to insulin. In skeletal muscles, dephosphorylated on Tyr-612 by TNS2 under anabolic conditions; dephosphorylation results in the proteasomal degradation of IRS1. Ubiquitinated by the Cul7-RING(FBXW8) complex in a mTOR-dependent manner, leading to its degradation: the Cul7-RING(FBXW8) complex recognizes and binds IRS1 previously phosphorylated by S6 kinase (RPS6KB1 or RPS6KB2). Ubiquitinated by TRAF4 through 'Lys-29' linkage; this ubiquitination regulates the interaction of IRS1 with IGFR and IRS1 tyrosine phosphorylation upon IGF1 stimulation. In terms of processing, S-nitrosylation at by BLVRB inhibits its activity.

It localises to the cytoplasm. The protein resides in the nucleus. In terms of biological role, signaling adapter protein that participates in the signal transduction from two prominent receptor tyrosine kinases, insulin receptor/INSR and insulin-like growth factor I receptor/IGF1R. Plays therefore an important role in development, growth, glucose homeostasis as well as lipid metabolism. Upon phosphorylation by the insulin receptor, functions as a signaling scaffold that propagates insulin action through binding to SH2 domain-containing proteins including the p85 regulatory subunit of PI3K, NCK1, NCK2, GRB2 or SHP2. Recruitment of GRB2 leads to the activation of the guanine nucleotide exchange factor SOS1 which in turn triggers the Ras/Raf/MEK/MAPK signaling cascade. Activation of the PI3K/AKT pathway is responsible for most of insulin metabolic effects in the cell, and the Ras/Raf/MEK/MAPK is involved in the regulation of gene expression and in cooperation with the PI3K pathway regulates cell growth and differentiation. Acts a positive regulator of the Wnt/beta-catenin signaling pathway through suppression of DVL2 autophagy-mediated degradation leading to cell proliferation. The chain is Insulin receptor substrate 1 (IRS1) from Chlorocebus aethiops (Green monkey).